The following is a 110-amino-acid chain: Large ribosomal subunit protein uL24 (110 aa).

The protein belongs to the universal ribosomal protein uL24 family. As to quaternary structure, part of the 50S ribosomal subunit.

Its function is as follows. One of two assembly initiator proteins, it binds directly to the 5'-end of the 23S rRNA, where it nucleates assembly of the 50S subunit. In terms of biological role, one of the proteins that surrounds the polypeptide exit tunnel on the outside of the subunit. The chain is Large ribosomal subunit protein uL24 from Thermus thermophilus (strain ATCC BAA-163 / DSM 7039 / HB27).